A 313-amino-acid polypeptide reads, in one-letter code: N-acetyl-gamma-glutamyl-phosphate reductase (313 aa).

Residue Cys117 is part of the active site.

This sequence belongs to the NAGSA dehydrogenase family. Type 2 subfamily.

Its subcellular location is the cytoplasm. It catalyses the reaction N-acetyl-L-glutamate 5-semialdehyde + phosphate + NADP(+) = N-acetyl-L-glutamyl 5-phosphate + NADPH + H(+). The protein operates within amino-acid biosynthesis; L-arginine biosynthesis; N(2)-acetyl-L-ornithine from L-glutamate: step 3/4. Its function is as follows. Catalyzes the NADPH-dependent reduction of N-acetyl-5-glutamyl phosphate to yield N-acetyl-L-glutamate 5-semialdehyde. The sequence is that of N-acetyl-gamma-glutamyl-phosphate reductase from Burkholderia cenocepacia (strain HI2424).